The chain runs to 498 residues: ATP synthase subunit beta, chloroplastic (498 aa).

ATP is bound at residue Gly172–Thr179.

The protein belongs to the ATPase alpha/beta chains family. As to quaternary structure, F-type ATPases have 2 components, CF(1) - the catalytic core - and CF(0) - the membrane proton channel. CF(1) has five subunits: alpha(3), beta(3), gamma(1), delta(1), epsilon(1). CF(0) has four main subunits: a(1), b(1), b'(1) and c(9-12).

Its subcellular location is the plastid. It localises to the chloroplast thylakoid membrane. It catalyses the reaction ATP + H2O + 4 H(+)(in) = ADP + phosphate + 5 H(+)(out). Functionally, produces ATP from ADP in the presence of a proton gradient across the membrane. The catalytic sites are hosted primarily by the beta subunits. This Triticum aestivum (Wheat) protein is ATP synthase subunit beta, chloroplastic.